The following is a 339-amino-acid chain: MAAACGPGAAGYCLLLGLHLFLLTAGPALGWNDPDRMLLRDVKALTLHYDRYTTSRRLDPIPQLKCVGGTAGCDSYTPKVIQCQNKGWDGYDVQWECKTDLDIAYKFGKTVVSCEGYESSEDQYVLRGSCGLEYNLDYTELGLQKLKESGKQHGFASFSDYYYKWSSADSCNMSGLITIVVLLGIAFVVYKLFLSDGQYSPPPYSEYPPFSHRYQRFTNSAGPPPPGFKSEFTGPQNTGHGATSGFGSAFTGQQGYENSGPGFWTGLGTGGILGYLFGSNRAATPFSDSWYYPSYPPSYPGTWNRAYSPLHGGSGSYSVCSNSDTKTRTASGYGGTRRR.

A signal peptide spans Met-1–Gly-30. At Trp-31–Met-173 the chain is on the lumenal side. A helical transmembrane segment spans residues Ser-174–Leu-194. The Cytoplasmic portion of the chain corresponds to Ser-195–Arg-339. Over residues Ser-318–Ala-330 the composition is skewed to polar residues. A disordered region spans residues Ser-318–Arg-339.

It belongs to the SARAF family. As to quaternary structure, interacts with STIM1; the interaction is inhibited by the interaction of STIM1 with EFHB. In terms of tissue distribution, highly expressed in macrophages.

The protein resides in the endoplasmic reticulum membrane. Its function is as follows. Negative regulator of store-operated Ca(2+) entry (SOCE) involved in protecting cells from Ca(2+) overfilling. In response to cytosolic Ca(2+) elevation after endoplasmic reticulum Ca(2+) refilling, promotes a slow inactivation of STIM (STIM1 or STIM2)-dependent SOCE activity: possibly act by facilitating the deoligomerization of STIM to efficiently turn off ORAI when the endoplasmic reticulum lumen is filled with the appropriate Ca(2+) levels, and thus preventing the overload of the cell with excessive Ca(2+) ions. This is Store-operated calcium entry-associated regulatory factor (SARAF) from Homo sapiens (Human).